Reading from the N-terminus, the 246-residue chain is tRNA (guanine-N(7)-)-methyltransferase (246 aa).

S-adenosyl-L-methionine contacts are provided by Glu77, Glu102, Asp129, and Asp152. Asp152 is a catalytic residue. Residues Lys156, Asp188, and 225-228 (TKFE) each bind substrate.

Belongs to the class I-like SAM-binding methyltransferase superfamily. TrmB family.

The enzyme catalyses guanosine(46) in tRNA + S-adenosyl-L-methionine = N(7)-methylguanosine(46) in tRNA + S-adenosyl-L-homocysteine. It functions in the pathway tRNA modification; N(7)-methylguanine-tRNA biosynthesis. Functionally, catalyzes the formation of N(7)-methylguanine at position 46 (m7G46) in tRNA. In Haemophilus influenzae (strain ATCC 51907 / DSM 11121 / KW20 / Rd), this protein is tRNA (guanine-N(7)-)-methyltransferase.